Here is a 587-residue protein sequence, read N- to C-terminus: ATP-dependent lipid A-core flippase (587 aa).

5 helical membrane passes run 31 to 51 (LIVS…LIYL), 68 to 88 (LKMM…TNFI), 145 to 165 (GSLI…AVMF), 166 to 186 (YTSW…AVLI), and 259 to 279 (VQVI…TPLI). In terms of domain architecture, ABC transmembrane type-1 spans 32–315 (IVSGVALVFN…LTAVNAQFQS (284 aa)). An ABC transporter domain is found at 347 to 583 (LEFKNVSFAY…NGAYKQLHSM (237 aa)). Position 381–388 (381–388 (GRSGSGKS)) interacts with ATP.

Belongs to the ABC transporter superfamily. Lipid exporter (TC 3.A.1.106) family. Homodimer.

The protein resides in the cell inner membrane. The catalysed reaction is ATP + H2O + lipid A-core oligosaccharideSide 1 = ADP + phosphate + lipid A-core oligosaccharideSide 2.. Involved in lipopolysaccharide (LPS) biosynthesis. Translocates lipid A-core from the inner to the outer leaflet of the inner membrane. Transmembrane domains (TMD) form a pore in the inner membrane and the ATP-binding domain (NBD) is responsible for energy generation. The sequence is that of ATP-dependent lipid A-core flippase from Haemophilus influenzae (strain ATCC 51907 / DSM 11121 / KW20 / Rd).